The sequence spans 113 residues: Nucleoid-associated protein RHA1_ro04210 (113 aa).

This sequence belongs to the YbaB/EbfC family. As to quaternary structure, homodimer.

Its subcellular location is the cytoplasm. It localises to the nucleoid. In terms of biological role, binds to DNA and alters its conformation. May be involved in regulation of gene expression, nucleoid organization and DNA protection. This chain is Nucleoid-associated protein RHA1_ro04210, found in Rhodococcus jostii (strain RHA1).